The following is a 391-amino-acid chain: Probable acridone synthase 3 (391 aa).

Residue cysteine 164 is part of the active site.

It belongs to the thiolase-like superfamily. Chalcone/stilbene synthases family.

The enzyme catalyses N-methylanthraniloyl-CoA + 3 malonyl-CoA + 3 H(+) = 1,3-dihydroxy-N-methylacridone + 3 CO2 + 4 CoA + H2O. The sequence is that of Probable acridone synthase 3 (ACS3) from Ruta graveolens (Common rue).